The primary structure comprises 226 residues: Uridylate kinase (226 aa).

9–13 (KVSGK) lines the ATP pocket. Residue Gly46 coordinates UMP. Positions 47 and 51 each coordinate ATP. Residues Asp68 and 116-122 (FQPGQST) each bind UMP. ATP is bound by residues Thr142, Tyr148, and Asp151.

This sequence belongs to the UMP kinase family. Homohexamer.

Its subcellular location is the cytoplasm. The catalysed reaction is UMP + ATP = UDP + ADP. The protein operates within pyrimidine metabolism; CTP biosynthesis via de novo pathway; UDP from UMP (UMPK route): step 1/1. With respect to regulation, inhibited by UTP. Its function is as follows. Catalyzes the reversible phosphorylation of UMP to UDP. The sequence is that of Uridylate kinase from Hyperthermus butylicus (strain DSM 5456 / JCM 9403 / PLM1-5).